Here is a 316-residue protein sequence, read N- to C-terminus: Ribosomal RNA small subunit methyltransferase H (316 aa).

Residues 35-37, Asp-55, Phe-84, Asp-105, and Gln-112 each bind S-adenosyl-L-methionine; that span reads SGH.

This sequence belongs to the methyltransferase superfamily. RsmH family.

The protein localises to the cytoplasm. The catalysed reaction is cytidine(1402) in 16S rRNA + S-adenosyl-L-methionine = N(4)-methylcytidine(1402) in 16S rRNA + S-adenosyl-L-homocysteine + H(+). In terms of biological role, specifically methylates the N4 position of cytidine in position 1402 (C1402) of 16S rRNA. This Streptococcus equi subsp. equi (strain 4047) protein is Ribosomal RNA small subunit methyltransferase H.